A 129-amino-acid chain; its full sequence is Large ribosomal subunit protein bL12 (129 aa).

This sequence belongs to the bacterial ribosomal protein bL12 family. Homodimer. Part of the ribosomal stalk of the 50S ribosomal subunit. Forms a multimeric L10(L12)X complex, where L10 forms an elongated spine to which 2 to 4 L12 dimers bind in a sequential fashion. Binds GTP-bound translation factors.

Functionally, forms part of the ribosomal stalk which helps the ribosome interact with GTP-bound translation factors. Is thus essential for accurate translation. The chain is Large ribosomal subunit protein bL12 from Micrococcus luteus (strain ATCC 4698 / DSM 20030 / JCM 1464 / CCM 169 / CCUG 5858 / IAM 1056 / NBRC 3333 / NCIMB 9278 / NCTC 2665 / VKM Ac-2230) (Micrococcus lysodeikticus).